We begin with the raw amino-acid sequence, 494 residues long: Glycerol kinase (494 aa).

An ADP-binding site is contributed by T13. ATP is bound by residues T13, T14, and S15. T13 provides a ligand contact to sn-glycerol 3-phosphate. R17 contacts ADP. The sn-glycerol 3-phosphate site is built by R83, E84, Y135, and D244. Residues R83, E84, Y135, D244, and Q245 each contribute to the glycerol site. Residues T266 and G309 each coordinate ADP. ATP contacts are provided by T266, G309, Q313, and G410. ADP-binding residues include G410 and N414.

The protein belongs to the FGGY kinase family.

The catalysed reaction is glycerol + ATP = sn-glycerol 3-phosphate + ADP + H(+). It functions in the pathway polyol metabolism; glycerol degradation via glycerol kinase pathway; sn-glycerol 3-phosphate from glycerol: step 1/1. With respect to regulation, inhibited by fructose 1,6-bisphosphate (FBP). Functionally, key enzyme in the regulation of glycerol uptake and metabolism. Catalyzes the phosphorylation of glycerol to yield sn-glycerol 3-phosphate. The sequence is that of Glycerol kinase from Shewanella sp. (strain MR-7).